A 488-amino-acid polypeptide reads, in one-letter code: Tripartite motif-containing protein 6 (488 aa).

An RING-type zinc finger spans residues 15–60; it reads CPICLELLTEPLSIDCGHSFCQVCIIGNSNNSVFGQGGRSSCPVCR. The segment at 92 to 133 adopts a B box-type zinc-finger fold; sequence LEVIFCALHGEKLQLFCKEDGKLICWLCERSQEHRGHHTFLM. Residues Cys-97, His-100, Cys-119, and His-125 each coordinate Zn(2+). Positions 132–223 form a coiled coil; it reads LMEEVAQEYQ…SIIEKAEGDL (92 aa). A B30.2/SPRY domain is found at 282-488; the sequence is DLRKMLKVFR…VPMTLRRPTS (207 aa).

It belongs to the TRIM/RBCC family. Homotrimer. Forms heteromultimers (via B30.2/SPRY domain) with TRIM5. Interacts with MYC. Interacts (via SPRY domain) with IKBKE. Interacts with VAMP8; this interaction contributes to the activation of the type I interferon antiviral response. Interacts with DHX16.

Its subcellular location is the cytoplasm. The catalysed reaction is S-ubiquitinyl-[E2 ubiquitin-conjugating enzyme]-L-cysteine + [acceptor protein]-L-lysine = [E2 ubiquitin-conjugating enzyme]-L-cysteine + N(6)-ubiquitinyl-[acceptor protein]-L-lysine.. It participates in protein modification; protein ubiquitination. In terms of biological role, E3 ubiquitin ligase that plays a crucial role in the activation of the IKBKE-dependent branch of the type I interferon signaling pathway. In concert with the ubiquitin-conjugating E2 enzyme UBE2K, synthesizes unanchored 'Lys-48'-linked polyubiquitin chains that promote the oligomerization and autophosphorylation of IKBKE leading to stimulation of an antiviral response. Also ubiquitinates MYC and inhibits its transcription activation activity, maintaining the pluripotency of embryonic stem cells. Promotes the association of unanchored 'Lys-48'-polyubiquitin chains with DHX16 leading to enhancement of RIGI-mediated innate antiviral immune response. This Mus musculus (Mouse) protein is Tripartite motif-containing protein 6 (Trim6).